The chain runs to 88 residues: UPF0223 protein YktA (88 aa).

Belongs to the UPF0223 family.

This is UPF0223 protein YktA (yktA) from Bacillus subtilis (strain 168).